The primary structure comprises 154 residues: Aspartate carbamoyltransferase regulatory chain (154 aa).

Zn(2+) contacts are provided by cysteine 109, cysteine 114, cysteine 138, and cysteine 141.

This sequence belongs to the PyrI family. In terms of assembly, contains catalytic and regulatory chains. The cofactor is Zn(2+).

Involved in allosteric regulation of aspartate carbamoyltransferase. The chain is Aspartate carbamoyltransferase regulatory chain from Yersinia enterocolitica serotype O:8 / biotype 1B (strain NCTC 13174 / 8081).